The sequence spans 242 residues: Stress response regulator protein 1 (242 aa).

Residues 118-236 form the Response regulatory domain; that stretch reads NFLLVDDNFI…FDHIITCIEK (119 aa). Asp-169 carries the 4-aspartylphosphate modification.

Functionally, required for stress adaptation, morphogenesis and virulence. The polypeptide is Stress response regulator protein 1 (SRR1) (Debaryomyces hansenii (strain ATCC 36239 / CBS 767 / BCRC 21394 / JCM 1990 / NBRC 0083 / IGC 2968) (Yeast)).